The chain runs to 466 residues: Prophage integrase IntF (466 aa).

Residues 134 to 239 (KTKVTFSVAW…LLRAFIKWSN (106 aa)) form the Core-binding (CB) domain. Residues 268–445 (KADDCLQKEQ…PLDLLRKWHE (178 aa)) form the Tyr recombinase domain. Catalysis depends on residues Arg306, Lys328, His396, Arg399, and His422. Tyr432 acts as the O-(3'-phospho-DNA)-tyrosine intermediate in catalysis.

This sequence belongs to the 'phage' integrase family.

Functionally, integrase is necessary for integration of the phage into the host genome by site-specific recombination. In conjunction with excisionase, integrase is also necessary for excision of the prophage from the host genome. In Escherichia coli (strain K12), this protein is Prophage integrase IntF (intF).